A 725-amino-acid chain; its full sequence is ATP-dependent zinc metalloprotease FtsH (725 aa).

Over 1–11 the chain is Cytoplasmic; it reads MDKMKKPKINW. The helical transmembrane segment at 12-32 threads the bilayer; it reads LLIVIVGIIAALLITVLVLLF. At 33–160 the chain is on the extracellular side; the sequence is SPKTQPKSFD…LFGQHIVQEN (128 aa). Residues 161–181 traverse the membrane as a helical segment; it reads GFITFIKAIWFPALIAIIIFL. At 182–725 the chain is on the cytoplasmic side; the sequence is GYKAQSRAAS…EEETLAEKAE (544 aa). 252–259 lines the ATP pocket; the sequence is GPPGTGKT. His-474 provides a ligand contact to Zn(2+). Glu-475 is a catalytic residue. Residues His-478 and Asp-552 each coordinate Zn(2+). The interval 680 to 725 is disordered; that stretch reads QVNESQEKDKQKNAQIKEDLSKMDKKDNLTKAKDKGEEETLAEKAE. Positions 684 to 725 are enriched in basic and acidic residues; sequence SQEKDKQKNAQIKEDLSKMDKKDNLTKAKDKGEEETLAEKAE.

The protein in the central section; belongs to the AAA ATPase family. It in the C-terminal section; belongs to the peptidase M41 family. Homohexamer. Zn(2+) serves as cofactor.

Its subcellular location is the cell membrane. In terms of biological role, acts as a processive, ATP-dependent zinc metallopeptidase for both cytoplasmic and membrane proteins. Plays a role in the quality control of integral membrane proteins. The chain is ATP-dependent zinc metalloprotease FtsH from Mycoplasmopsis pulmonis (strain UAB CTIP) (Mycoplasma pulmonis).